A 173-amino-acid chain; its full sequence is Cytochrome c-type biogenesis protein CcmE (173 aa).

At 1-7 (MTRKSRR) the chain is on the cytoplasmic side. The chain crosses the membrane as a helical; Signal-anchor for type II membrane protein span at residues 8 to 28 (LILIAACGAVLALALGLILSA). Residues 29–173 (MSGSIVFFRS…DATLGQRSER (145 aa)) lie on the Periplasmic side of the membrane. Heme is bound by residues histidine 122 and tyrosine 126. Residues 134 to 173 (ALKAQGRWQEGGGKDASKAAPKDAAKPETADATLGQRSER) are disordered. A compositionally biased stretch (basic and acidic residues) spans 145-162 (GGKDASKAAPKDAAKPET).

It belongs to the CcmE/CycJ family.

It is found in the cell inner membrane. Its function is as follows. Heme chaperone required for the biogenesis of c-type cytochromes. Transiently binds heme delivered by CcmC and transfers the heme to apo-cytochromes in a process facilitated by CcmF and CcmH. This Methylorubrum extorquens (strain CM4 / NCIMB 13688) (Methylobacterium extorquens) protein is Cytochrome c-type biogenesis protein CcmE.